A 132-amino-acid polypeptide reads, in one-letter code: Bombinin-like peptides (132 aa).

Positions 1–18 (MNFKYIIAVSFLIASAYA) are cleaved as a signal peptide. Positions 19–42 (RSEEYDIQSLSQRDVLEEESLRKI) are excised as a propeptide. F68 carries the phenylalanine amide modification. Positions 72 to 112 (TAEDHEVMKRLEAAMRDLDSLDYPEEASERETRGFNQEEKE) are excised as a propeptide. L131 carries the leucine amide modification.

This sequence belongs to the bombinin family. In terms of tissue distribution, expressed by the skin glands.

The protein resides in the secreted. Has antimicrobial activity against Gram-negative bacterium E.coli (MIC=26.3 uM), Gram-positive bacterium S.aureus (MIC=26.3 uM) and yeast C.albicans (MIC=52.5 uM). Has moderate hemolytic activity towards human erythrocytes at a concentration of 52.2 uM. Functionally, has no antimicrobial activity at concentrations up to 161 uM. Has moderate hemolytic activity towards human erythrocytes at a concentration of 40.3 uM. In Bombina orientalis (Oriental fire-bellied toad), this protein is Bombinin-like peptides.